The following is a 258-amino-acid chain: Protein U52 (258 aa).

This sequence belongs to the herpesviridae UL79 family.

In Human herpesvirus 6A (strain Uganda-1102) (HHV-6 variant A), this protein is Protein U52 (U52).